The chain runs to 392 residues: ERBB-3 BINDING PROTEIN 1 (392 aa).

2 necessary for nucleolar localization regions span residues 1–50 (MSSD…IVDI) and 298–392 (HLQP…NAQE). The RNA-binding stretch occupies residues 48–56 (VDICEKGDS). The interval 355–372 (GIKKKKGGGKKKKAQKAG) is interaction with RNA. The short motif at 357–367 (KKKKGGGKKKK) is the Nuclear localization signal element. Basic residues predominate over residues 358–369 (KKKGGGKKKKAQ). The tract at residues 358–392 (KKKGGGKKKKAQKAGEKGEASTEAEPMDASSNAQE) is disordered.

It belongs to the peptidase M24 family. In terms of assembly, component of a ribonucleoprotein complex. Interacts with REIL1 and REIL2. As to expression, strongly expressed in calls, roots and flowers, to a lower extent, in stems and siliques, but hardly detectable in leaves.

The protein resides in the nucleus. Binds RNA. Associates with 28S, 18S and 5.8S mature rRNAs, several rRNA precursors and probably U3 small nucleolar RNA. May be involved in regulation of intermediate and late steps of rRNA processing. May be involved in ribosome assembly. Required for expression of cell cycle genes such as CYCD3-1, RNR2A and CDKB1-1. Promotes, in a dose- and auxin-dependent manner, organ growth by stimulating both cell proliferation and expansion, via the regulation of RBR1 levels. This Arabidopsis thaliana (Mouse-ear cress) protein is ERBB-3 BINDING PROTEIN 1.